Reading from the N-terminus, the 102-residue chain is Small ribosomal subunit protein uS10 (102 aa).

It belongs to the universal ribosomal protein uS10 family. Part of the 30S ribosomal subunit.

In terms of biological role, involved in the binding of tRNA to the ribosomes. The protein is Small ribosomal subunit protein uS10 of Pyrococcus abyssi (strain GE5 / Orsay).